The sequence spans 239 residues: Small ribosomal subunit protein uS3 (239 aa).

The KH type-2 domain maps to 39–107; that stretch reads VREFLRKKLA…ATSINIEEIR (69 aa). The disordered stretch occupies residues 215 to 239; sequence TSNTNELSDEKRNRRKPRNANRRKE. Over residues 227 to 239 the composition is skewed to basic residues; that stretch reads NRRKPRNANRRKE.

The protein belongs to the universal ribosomal protein uS3 family. As to quaternary structure, part of the 30S ribosomal subunit. Forms a tight complex with proteins S10 and S14.

Its function is as follows. Binds the lower part of the 30S subunit head. Binds mRNA in the 70S ribosome, positioning it for translation. This is Small ribosomal subunit protein uS3 from Dichelobacter nodosus (strain VCS1703A).